The following is a 651-amino-acid chain: Cylicin-1 (651 aa).

Disordered stretches follow at residues 110 to 241 (LKKA…CSEN) and 267 to 615 (NYSQ…CEPS). Basic and acidic residues-rich tracts occupy residues 111–129 (KKAEYKKSKDEKGGTPLKK) and 146–173 (QIVEEKTKRQNEADKTPLKSSHENEQSK). Residues 186–195 (QNSKTVSKNC) are compositionally biased toward polar residues. Residues 196-205 (SQKDKKDSKN) show a composition bias toward basic and acidic residues. Positions 230 to 241 (SNDPISEICSEN) are enriched in polar residues. Residues 271–281 (NNSKNYSLKYT) are compositionally biased toward low complexity. Tandem repeats lie at residues 278 to 305 (LKYTKYTKKDTKKNAKKSSDAESEDSKD), 306 to 342 (AKKDSKKVKKNVKKDDKKKDVKKDTESTDAESGDSKD), 343 to 379 (ERKDTKKDKKKLKKDDKKKDTKKYPESTDTESGDAKD), 380 to 417 (ARNDSRNLKKASKNDDKKKDAKKITFSTDSESELESKE), 418 to 453 (SQKDEKKDKKDSKTDNKKSVKNDEESTDADSEPKGD), 454 to 491 (SKKGKKDEKKGKKDSKKDDKKKDAKKNAESTEMESDLE), 492 to 531 (LKKDKKHSKEKKGSKKDIKKDARKDTESTDAEFDESSKTG), and 532 to 553 (FKTSTKIKGSDTESEESLYKPG). 6 stretches are compositionally biased toward basic and acidic residues: residues 284-308 (TKKDTKKNAKKSSDAESEDSKDAKK), 318-331 (KKDDKKKDVKKDTE), 338-368 (GDSKDERKDTKKDKKKLKKDDKKKDTKKYPE), 375-402 (GDAKDARNDSRNLKKASKNDDKKKDAKK), 413-441 (LESKESQKDEKKDKKDSKTDNKKSVKNDE), and 448-482 (SEPKGDSKKGKKDEKKGKKDSKKDDKKKDAKKNAE). Over residues 495–505 (DKKHSKEKKGS) the composition is skewed to basic residues. Residues 506 to 518 (KKDIKKDARKDTE) show a composition bias toward basic and acidic residues. The segment covering 529-538 (KTGFKTSTKI) has biased composition (polar residues). Residues 532-553 (FKTSTKIKGSDTESEESLYKPG) form an 8 X approximate tandem repeats region. Residues 587–607 (TFNEKGEKASTGRVPPSREKP) show a composition bias toward basic and acidic residues.

Interacts with proteins of spermatozoa head including ACTL7A, CCIN, FAM209A and SPACA1; the interactions may be necessary for proper acrosome attachment to the nuclear envelope. In terms of tissue distribution, testis.

It is found in the cytoplasm. It localises to the cytoskeleton. Its subcellular location is the perinuclear theca. The protein localises to the calyx. Plays a role in the establishment of normal sperm morphology during spermatogenesis and is required for acrosome attachment to the nuclear envelope. The chain is Cylicin-1 (CYLC1) from Homo sapiens (Human).